The following is a 428-amino-acid chain: UDP-N-acetylglucosamine 1-carboxyvinyltransferase 2 (428 aa).

Position 22-23 (22-23) interacts with phosphoenolpyruvate; sequence KN. Residue Arg92 participates in UDP-N-acetyl-alpha-D-glucosamine binding. Cys116 functions as the Proton donor in the catalytic mechanism. 2-(S-cysteinyl)pyruvic acid O-phosphothioketal is present on Cys116. Residues 121–125, Asp304, and Ile326 each bind UDP-N-acetyl-alpha-D-glucosamine; that span reads RPIDQ.

Belongs to the EPSP synthase family. MurA subfamily.

Its subcellular location is the cytoplasm. It catalyses the reaction phosphoenolpyruvate + UDP-N-acetyl-alpha-D-glucosamine = UDP-N-acetyl-3-O-(1-carboxyvinyl)-alpha-D-glucosamine + phosphate. Its pathway is cell wall biogenesis; peptidoglycan biosynthesis. Its function is as follows. Cell wall formation. Adds enolpyruvyl to UDP-N-acetylglucosamine. This Oceanobacillus iheyensis (strain DSM 14371 / CIP 107618 / JCM 11309 / KCTC 3954 / HTE831) protein is UDP-N-acetylglucosamine 1-carboxyvinyltransferase 2.